The primary structure comprises 379 residues: LIM/homeobox protein Lhx9 (379 aa).

LIM zinc-binding domains are found at residues 51-112 (TLCA…RFSV) and 113-175 (QRCA…LVQG). 2 disordered regions span residues 232-257 (ENDTDLDRDQSYPPSQKTKRMRTSFK) and 310-379 (RQEN…TNLF). Residues 248 to 257 (KTKRMRTSFK) show a composition bias toward basic residues. Positions 249-308 (TKRMRTSFKHHQLRTTKSYFAINHNPDAKDLKQLAQKTGLTKRVLQVWFQNARAKFRRNL) form a DNA-binding region, homeobox. Polar residues predominate over residues 326-379 (APASTDSAALTPTGAASTLSDLTSPSLNVGASVTPNMDSHESGSPSQTTLTNLF).

As to expression, isoform 1 and isoform 3 are expressed in ovary, testis, brain and heart. Isoform 4 and isoform 5 are expressed in brain.

Its subcellular location is the nucleus. Its function is as follows. May be involved in gonadal development. The chain is LIM/homeobox protein Lhx9 (lhx9) from Glandirana rugosa (Japanese wrinkled frog).